A 967-amino-acid polypeptide reads, in one-letter code: MPFTLGQRWISDTESELGLGTVVAVDTRMITLLFPASGENRLYSRSDAPITRVMFNPGDTVTSHEGWQLKVDDVREEKGLLVYCGQRLDDETSAELREVFLDSKLTFNKPQDRLFAGQIDRMDRFALRYRARKHQNEQALQQWGGLRGMRASLIPHQLHIAHEVGQRHAPRVLLADEVGLGKTIEAGMIIHQQLLAGRASRVLIIVPETLQHQWLVEMLRRFNLLFSLFDDERYAEAKLDSSNPFETEQLVICSLGFVQRNAQRFAQLVNADWDLLVVDEAHHLVWSEESPSAEYQAVETLARATPAVLLLTATPEQLGQQSHFARLRLLDPNRFHDYQEFLAEQQQYRPVADAVTLLLAGEKAQTAELNALSDLLGEQDIEPLLKAINSDSDDNQKARQELIAMLMDRHGTSRVLFRNTRQGVKGFPQRILHQIRLPLPSQYQTAIKVSGIMNANKTLEVRARDMLYPEQIYQQLEGDDATWWNFDPRVEWLLNYLTANRDEKVLVICAQAATALQLEQVLRTREAIRAAVFHEGLSILERDRAAAYFASEEEGAQVLICSEIGSEGRNFQFASHLVMFDLPFNPDLLEQRIGRLDRIGQAKEIQILVPYLENTAQAMLVRWYHEGLDAFEHTCPTGRTIYDAHHAQLIERLTTVGEQQGLDEFIHTCRQQHDNLKQQLEQGRDRLLEMHSNGGEQAQLLAQAIAEQDNDVNLVTFALNLFDIVGINQEDRSDNLIILTPSDHMLVPDFPGLPQDGCTITFDRDQALSREDAQFISWEHPLIRNGLDLVLSGDTGSCAVSLLKNKALPVGTLLAELVYVVEAQAPKHLQLTRFLPPTPVRLLMDRKGTNLAAQVEFESFNRQLNAVNRHTSSKLVNAVQADVHAMLQQAEALVEAQARQLITEAQEQADLQLRRELERLEALKAVNPNIREDELTALESQREQVLSNLHEANWRLDAIRLVVVTHQ.

Residues 163-333 (EVGQRHAPRV…FARLRLLDPN (171 aa)) enclose the Helicase ATP-binding domain. Residue 176–183 (DEVGLGKT) participates in ATP binding. Positions 279–282 (DEAH) match the DEAH box motif. Residues 489–643 (RVEWLLNYLT…TCPTGRTIYD (155 aa)) form the Helicase C-terminal domain.

It belongs to the SNF2/RAD54 helicase family. RapA subfamily. Interacts with the RNAP. Has a higher affinity for the core RNAP than for the holoenzyme. Its ATPase activity is stimulated by binding to RNAP.

Functionally, transcription regulator that activates transcription by stimulating RNA polymerase (RNAP) recycling in case of stress conditions such as supercoiled DNA or high salt concentrations. Probably acts by releasing the RNAP, when it is trapped or immobilized on tightly supercoiled DNA. Does not activate transcription on linear DNA. Probably not involved in DNA repair. This Pectobacterium carotovorum subsp. carotovorum (strain PC1) protein is RNA polymerase-associated protein RapA.